Here is a 141-residue protein sequence, read N- to C-terminus: Nucleoside diphosphate kinase (141 aa).

Positions 11, 59, 87, 93, 104, and 114 each coordinate ATP. The active-site Pros-phosphohistidine intermediate is His-117.

It belongs to the NDK family. Homotetramer. Requires Mg(2+) as cofactor.

Its subcellular location is the cytoplasm. The catalysed reaction is a 2'-deoxyribonucleoside 5'-diphosphate + ATP = a 2'-deoxyribonucleoside 5'-triphosphate + ADP. It catalyses the reaction a ribonucleoside 5'-diphosphate + ATP = a ribonucleoside 5'-triphosphate + ADP. In terms of biological role, major role in the synthesis of nucleoside triphosphates other than ATP. The ATP gamma phosphate is transferred to the NDP beta phosphate via a ping-pong mechanism, using a phosphorylated active-site intermediate. The protein is Nucleoside diphosphate kinase of Cupriavidus taiwanensis (strain DSM 17343 / BCRC 17206 / CCUG 44338 / CIP 107171 / LMG 19424 / R1) (Ralstonia taiwanensis (strain LMG 19424)).